Consider the following 736-residue polypeptide: Eukaryotic translation initiation factor 3 subunit B (736 aa).

Residues 1-94 (MAAVFDDIRL…LFIEFEDAGA (94 aa)) form a sufficient for interaction with HCR1 and TIF32 region. The tract at residues 1 to 219 (MAAVFDDIRL…GIASWGGPQF (219 aa)) is sufficient for interaction with PIC8. The RRM domain occupies 37–120 (RYVVVDGAPV…HRLWVNGLDD (84 aa)). WD repeat units lie at residues 140 to 182 (EFEA…PENV), 186 to 224 (RRNW…RLRR), 226 to 244 (AHPD…YLVT), 245 to 284 (FSSE…CVKT), 288 to 328 (PPQQ…QLLG), 332 to 375 (MKIE…QSCK), 443 to 483 (EIKD…VSFY), 511 to 557 (AIDG…TEKI), 566 to 604 (ATLR…KAEN), and 616 to 662 (VREE…QDAM).

This sequence belongs to the eIF-3 subunit B family. As to quaternary structure, component of the eukaryotic translation initiation factor 3 (eIF-3) complex.

The protein localises to the cytoplasm. In terms of biological role, RNA-binding component of the eukaryotic translation initiation factor 3 (eIF-3) complex, which is involved in protein synthesis of a specialized repertoire of mRNAs and, together with other initiation factors, stimulates binding of mRNA and methionyl-tRNAi to the 40S ribosome. The eIF-3 complex specifically targets and initiates translation of a subset of mRNAs involved in cell proliferation. In Eremothecium gossypii (strain ATCC 10895 / CBS 109.51 / FGSC 9923 / NRRL Y-1056) (Yeast), this protein is Eukaryotic translation initiation factor 3 subunit B.